The chain runs to 273 residues: Pantothenate synthetase (273 aa).

27–34 (MGALHDGH) is an ATP binding site. Catalysis depends on H34, which acts as the Proton donor. Q58 is a binding site for (R)-pantoate. Q58 serves as a coordination point for beta-alanine. ATP is bound at residue 144-147 (GKKD). Position 150 (Q150) interacts with (R)-pantoate. ATP-binding positions include V173 and 181–184 (LSSR).

This sequence belongs to the pantothenate synthetase family. As to quaternary structure, homodimer.

It is found in the cytoplasm. The enzyme catalyses (R)-pantoate + beta-alanine + ATP = (R)-pantothenate + AMP + diphosphate + H(+). It functions in the pathway cofactor biosynthesis; (R)-pantothenate biosynthesis; (R)-pantothenate from (R)-pantoate and beta-alanine: step 1/1. Its function is as follows. Catalyzes the condensation of pantoate with beta-alanine in an ATP-dependent reaction via a pantoyl-adenylate intermediate. The polypeptide is Pantothenate synthetase (Campylobacter concisus (strain 13826)).